The sequence spans 505 residues: Maturase K (505 aa).

The protein belongs to the intron maturase 2 family. MatK subfamily.

The protein resides in the plastid. The protein localises to the chloroplast. Its function is as follows. Usually encoded in the trnK tRNA gene intron. Probably assists in splicing its own and other chloroplast group II introns. The sequence is that of Maturase K from Allamanda cathartica (Yellow allamanda).